Reading from the N-terminus, the 178-residue chain is Ribosome maturation factor RimM (178 aa).

The PRC barrel domain maps to 104-177 (SDEYYFYEVI…KIVVKLPEWL (74 aa)).

Belongs to the RimM family. As to quaternary structure, binds ribosomal protein uS19.

It localises to the cytoplasm. In terms of biological role, an accessory protein needed during the final step in the assembly of 30S ribosomal subunit, possibly for assembly of the head region. Essential for efficient processing of 16S rRNA. May be needed both before and after RbfA during the maturation of 16S rRNA. It has affinity for free ribosomal 30S subunits but not for 70S ribosomes. In Thermosipho melanesiensis (strain DSM 12029 / CIP 104789 / BI429), this protein is Ribosome maturation factor RimM.